The sequence spans 624 residues: 1-deoxy-D-xylulose-5-phosphate synthase (624 aa).

Residues His80 and 121-123 (GHS) contribute to the thiamine diphosphate site. Asp152 is a binding site for Mg(2+). Thiamine diphosphate is bound by residues 153 to 154 (GA), Asn181, Tyr288, and Glu370. Asn181 contributes to the Mg(2+) binding site.

The protein belongs to the transketolase family. DXPS subfamily. Homodimer. Mg(2+) is required as a cofactor. Requires thiamine diphosphate as cofactor.

It carries out the reaction D-glyceraldehyde 3-phosphate + pyruvate + H(+) = 1-deoxy-D-xylulose 5-phosphate + CO2. It functions in the pathway metabolic intermediate biosynthesis; 1-deoxy-D-xylulose 5-phosphate biosynthesis; 1-deoxy-D-xylulose 5-phosphate from D-glyceraldehyde 3-phosphate and pyruvate: step 1/1. Functionally, catalyzes the acyloin condensation reaction between C atoms 2 and 3 of pyruvate and glyceraldehyde 3-phosphate to yield 1-deoxy-D-xylulose-5-phosphate (DXP). The polypeptide is 1-deoxy-D-xylulose-5-phosphate synthase (Proteus mirabilis (strain HI4320)).